An 83-amino-acid polypeptide reads, in one-letter code: Cytochrome b559 subunit alpha (83 aa).

A helical membrane pass occupies residues valine 21–tryptophan 35. Histidine 23 lines the heme pocket.

It belongs to the PsbE/PsbF family. In terms of assembly, heterodimer of an alpha subunit and a beta subunit. PSII is composed of 1 copy each of membrane proteins PsbA, PsbB, PsbC, PsbD, PsbE, PsbF, PsbH, PsbI, PsbJ, PsbK, PsbL, PsbM, PsbT, PsbX, PsbY, PsbZ, Psb30/Ycf12, at least 3 peripheral proteins of the oxygen-evolving complex and a large number of cofactors. It forms dimeric complexes. Heme b is required as a cofactor.

The protein localises to the plastid. It localises to the chloroplast thylakoid membrane. Its function is as follows. This b-type cytochrome is tightly associated with the reaction center of photosystem II (PSII). PSII is a light-driven water:plastoquinone oxidoreductase that uses light energy to abstract electrons from H(2)O, generating O(2) and a proton gradient subsequently used for ATP formation. It consists of a core antenna complex that captures photons, and an electron transfer chain that converts photonic excitation into a charge separation. The chain is Cytochrome b559 subunit alpha from Pinus koraiensis (Korean pine).